The primary structure comprises 522 residues: MSEHSHDNKPGELEESRLVVDNDFEVAPVNDRLFGSFVEHLGRCVYDGIYEPGHPEADEDGFRKDVIELVKELGATTIRYPGGNFVSGYRWEDGVGPRDERPRRLDLAWHSTETNQFGLHEMAKWLEKTGGNELMEAVNLGTRGLEEALDLLEYANIPGGTKLSEERRANGADQPFGIKMWCLGNEMDGPWQTGHKSAEDYGTLAASVAAGMRAIDPNVELVVCGSSSHVMDTFGKWEETVLEKTFDNVNFVSCHAYYHPELQPDGTRDMKSFLASGVDMDGFINDVAAAIDATKARLKSKHDVFISFDEWNVWYLNEEPSKNPEGIGNWPVAPRLLEDVYSAADAVVFGDLMITLLKNADRVHAASLAQLVNVIAPIMTEPGGPAWRQTTFYPFSLTAKLAKGGTVLEPKLASGTYETDKYGEVPTINSVAVRGEDGTISVFVVNRSMEAANDFAIKLPEGFALSAVEAQTLHEDDLLAKNTLEDQNRVVLHPNTTITSDADTGTVRVTLPPVSWTAVHVK.

Glu39, Asn84, and Asn185 together coordinate alpha-L-arabinofuranose. Glu186 (proton donor/acceptor) is an active-site residue. The alpha-L-arabinofuranose site is built by Tyr257, Glu310, and Gln370. The active-site Nucleophile is the Glu310.

The protein belongs to the glycosyl hydrolase 51 family. As to quaternary structure, homohexamer; trimer of dimers.

It catalyses the reaction Hydrolysis of terminal non-reducing alpha-L-arabinofuranoside residues in alpha-L-arabinosides.. The enzyme catalyses (20S)-ginsenoside Rc + H2O = L-arabinofuranose + (20S)-ginsenoside Rd. With respect to regulation, completely inhibited by Cu(2+) and partially inhibited by Co(2+) and Ba(2+). Catalyzes the hydrolysis of p-nitrophenyl-alpha-L-arabinofuranoside (pNP-alphaL-Af) and the hydrolysis of the terminal alpha-L-arabinofuranoside at the C20 position of ginsenoside Rc to produce ginsenoside Rd. Cannot hydrolyze p-nitrophenyl-alpha-L-arabinopyranoside (pNP-alphaL-Ap) and ginsenoside Rb2. In Bifidobacterium longum, this protein is Exo-alpha-(1-&gt;6)-L-arabinofuranosidase.